Consider the following 507-residue polypeptide: ATP synthase subunit alpha (507 aa).

171 to 178 (GDRQTGKT) serves as a coordination point for ATP.

This sequence belongs to the ATPase alpha/beta chains family. F-type ATPases have 2 components, CF(1) - the catalytic core - and CF(0) - the membrane proton channel. CF(1) has five subunits: alpha(3), beta(3), gamma(1), delta(1), epsilon(1). CF(0) has three main subunits: a(1), b(2) and c(9-12). The alpha and beta chains form an alternating ring which encloses part of the gamma chain. CF(1) is attached to CF(0) by a central stalk formed by the gamma and epsilon chains, while a peripheral stalk is formed by the delta and b chains.

It is found in the cell inner membrane. It catalyses the reaction ATP + H2O + 4 H(+)(in) = ADP + phosphate + 5 H(+)(out). Its function is as follows. Produces ATP from ADP in the presence of a proton gradient across the membrane. The alpha chain is a regulatory subunit. The chain is ATP synthase subunit alpha from Bdellovibrio bacteriovorus (strain ATCC 15356 / DSM 50701 / NCIMB 9529 / HD100).